The chain runs to 294 residues: Transcription factor nsy-7 (294 aa).

Disordered stretches follow at residues 43 to 119 and 167 to 191; these read CNLR…TPDL and LRLPNGNGTEKYHPYGGNSKNDSPL. Composition is skewed to polar residues over residues 52-63 and 81-115; these read DQPTTSSNSVKE and RRQSNPHSSLPAISSSTVKNEPTDSWTPSALSNDP. The segment at residues 192–232 is a DNA-binding region (homeobox; atypical); it reads QTRMKGWQREYIKEVIKDSHYPTEEELRDIEQKCDLSRKQI. The interval 238–274 is disordered; the sequence is KRLTNPNRKPRVNHHDEKRKEQEERDSLADPDDDMIN. A compositionally biased stretch (basic and acidic residues) spans 250–265; that stretch reads NHHDEKRKEQEERDSL.

Expressed widely, including gut, the amphid sheath glial cells, and head and tail neurons including AWC, ASE, and ASH. Expressed in AWC (ON) olfactory neuron but not AWC (OFF).

It localises to the nucleus. Its function is as follows. Transcriptional regulator which binds DNA consensus sequence 5'-CCTTAAC-3'. Plays a role in establishing and maintaining asymmetric cell fates in chemosensory AWC neurons during larval neuronal development. This is achieved by repressing the expression of multiple AWC (OFF) genes, including srsx-3 and hlh-11 in the AWC (ON) neuron. Activates expression of sox-2 in the AWC (ON) neuron. The protein is Transcription factor nsy-7 of Caenorhabditis elegans.